We begin with the raw amino-acid sequence, 82 residues long: RNA-binding protein BH0128 (82 aa).

The protein belongs to the eukaryotic ribosomal protein eL8 family.

In Halalkalibacterium halodurans (strain ATCC BAA-125 / DSM 18197 / FERM 7344 / JCM 9153 / C-125) (Bacillus halodurans), this protein is RNA-binding protein BH0128.